Reading from the N-terminus, the 102-residue chain is Small ribosomal subunit protein uS10 (102 aa).

This sequence belongs to the universal ribosomal protein uS10 family. In terms of assembly, part of the 30S ribosomal subunit.

Functionally, involved in the binding of tRNA to the ribosomes. The sequence is that of Small ribosomal subunit protein uS10 from Malacoplasma penetrans (strain HF-2) (Mycoplasma penetrans).